The primary structure comprises 117 residues: Cell cycle protein GpsB (117 aa).

Positions 32-70 (LDNVIKDYDAFVKENQRLQDENERLLAKVDELTRQVQVG) form a coiled coil.

It belongs to the GpsB family. In terms of assembly, forms polymers through the coiled coil domains. Interacts with PBP1, MreC and EzrA.

The protein resides in the cytoplasm. Functionally, divisome component that associates with the complex late in its assembly, after the Z-ring is formed, and is dependent on DivIC and PBP2B for its recruitment to the divisome. Together with EzrA, is a key component of the system that regulates PBP1 localization during cell cycle progression. Its main role could be the removal of PBP1 from the cell pole after pole maturation is completed. Also contributes to the recruitment of PBP1 to the division complex. Not essential for septum formation. This chain is Cell cycle protein GpsB, found in Levilactobacillus brevis (strain ATCC 367 / BCRC 12310 / CIP 105137 / JCM 1170 / LMG 11437 / NCIMB 947 / NCTC 947) (Lactobacillus brevis).